Reading from the N-terminus, the 444-residue chain is 3-phosphoshikimate 1-carboxyvinyltransferase (444 aa).

3-phosphoshikimate is bound by residues lysine 29, serine 30, and arginine 34. Residue lysine 29 participates in phosphoenolpyruvate binding. Residues glycine 103 and arginine 132 each contribute to the phosphoenolpyruvate site. Residues serine 177, glutamine 179, aspartate 329, and lysine 356 each contribute to the 3-phosphoshikimate site. Glutamine 179 serves as a coordination point for phosphoenolpyruvate. The Proton acceptor role is filled by aspartate 329. Phosphoenolpyruvate contacts are provided by arginine 360 and arginine 402.

The protein belongs to the EPSP synthase family. As to quaternary structure, monomer.

The protein resides in the cytoplasm. The enzyme catalyses 3-phosphoshikimate + phosphoenolpyruvate = 5-O-(1-carboxyvinyl)-3-phosphoshikimate + phosphate. It participates in metabolic intermediate biosynthesis; chorismate biosynthesis; chorismate from D-erythrose 4-phosphate and phosphoenolpyruvate: step 6/7. In terms of biological role, catalyzes the transfer of the enolpyruvyl moiety of phosphoenolpyruvate (PEP) to the 5-hydroxyl of shikimate-3-phosphate (S3P) to produce enolpyruvyl shikimate-3-phosphate and inorganic phosphate. In Prochlorococcus marinus (strain NATL2A), this protein is 3-phosphoshikimate 1-carboxyvinyltransferase.